Consider the following 1170-residue polypeptide: Structural maintenance of chromosomes protein 2 (1170 aa).

32–39 contacts ATP; it reads GLNGSGKS. The stretch at 172-469 forms a coiled coil; it reads KMFEDRREKA…DKLRARLVEY (298 aa). One can recognise an SMC hinge domain in the interval 523 to 641; sequence VHGVVGQLFQ…CEDPETAKKI (119 aa). The stretch at 678-1027 forms a coiled coil; sequence VDIQKYNQIQ…ISKLNEYKRE (350 aa).

Belongs to the SMC family. SMC2 subfamily. Forms a heterodimer with SMC4. Component of the condensin complex, which contains the SMC2 and SMC4 heterodimer, and three non SMC subunits that probably regulate the complex: BRN1, YCS4 and YCG1/YCS5.

The protein resides in the nucleus. It is found in the cytoplasm. It localises to the chromosome. Its function is as follows. Central component of the condensin complex, a complex required for conversion of interphase chromatin into mitotic-like condense chromosomes. The condensin complex probably introduces positive supercoils into relaxed DNA in the presence of type I topoisomerases and converts nicked DNA into positive knotted forms in the presence of type II topoisomerases. In Saccharomyces cerevisiae (strain ATCC 204508 / S288c) (Baker's yeast), this protein is Structural maintenance of chromosomes protein 2 (SMC2).